We begin with the raw amino-acid sequence, 189 residues long: Protein Rex (189 aa).

Over residues 1–16 the composition is skewed to basic residues; the sequence is MPKTRRRPRRSQRKRP. The tract at residues 1 to 28 is disordered; it reads MPKTRRRPRRSQRKRPPTPWPTSQGLDR. The Nuclear localization signal, and RNA-binding (RxRE) signature appears at 2 to 18; it reads PKTRRRPRRSQRKRPPT. A homomultimerization region spans residues 56-70; the sequence is RPVYIVTPYWPPVQS. Ser-70 carries the post-translational modification Phosphoserine; by host. A Nuclear export signal motif is present at residues 82–93; that stretch reads LSAQLYSSLSLD. Residues 84–94 show a composition bias toward low complexity; the sequence is AQLYSSLSLDS. The tract at residues 84–189 is disordered; the sequence is AQLYSSLSLD…PPSPGPSCPT (106 aa). The span at 111–125 shows a compositional bias: pro residues; the sequence is RRPPIQPPTFHPPSS. The interval 123-131 is homomultimerization; the sequence is PSSRPCANT. A compositionally biased stretch (polar residues) spans 127 to 164; sequence PCANTPPSETDTWNPPLGSTSQPCLFQTPASGPKTCTP. The residue at position 174 (Thr-174) is a Phosphothreonine; by host. Position 177 is a phosphoserine; by host (Ser-177). Residues 178 to 189 are compositionally biased toward pro residues; sequence FPPPSPGPSCPT.

This sequence belongs to the deltaretrovirus Rex protein family. Homomultimer. Multimeric assembly is essential for activity and involves XPO1. Binds to human XPO1 and KPNB1. Interacts (via N-terminal nuclear localization signal) with human NPM1. Phosphorylated.

Its subcellular location is the host nucleus. It is found in the host nucleolus. It localises to the host cytoplasm. In terms of biological role, rex escorts unspliced gag-pro-pol and singly spliced env mRNAs out of the nucleus of infected cells. These mRNAs carry a recognition sequence called Rex responsive element (RxRE or XRE) located at the 3' region of the long terminal repeat (LTR). This function is essential since most HTLV proteins are translated from unspliced or partially spliced pre-mRNAs that cannot exit the nucleus by the pathway used by fully processed cellular mRNAs. Rex itself is translated from a fully spliced mRNA that probably readily exits the nucleus. Rex's nuclear localization signal (NLS) binds directly to KPNB1/importin beta-1 without previous binding to KPNA1/importin alpha-1. KPNB1 binds to the GDP bound form of RAN (Ran-GDP) and targets Rex to the nucleus. In the nucleus, the conversion from Ran-GDP to Ran-GTP dissociates Rex from KPNB1 and allows Rex's binding to the RRE in viral pre-mRNAs. Rex multimerizes on the RRE via cooperative assembly. This multimerization is critical for its full biological activity, since it may shield the viral RNA from being spliced or down-regulated, and probably exposes Rex's nuclear export signal (NES) to the surface. Rex can then form a complex with XPO1/CRM1, RANBP3 and Ran-GTP, leading to nuclear export of the complex. Conversion from Ran-GTP to Ran-GDP mediates dissociation of the Rex/RRE/XPO1/RANBP3/RAN complex, so that Rex can return to the nucleus for a subsequent round of export. In Homo sapiens (Human), this protein is Protein Rex.